A 415-amino-acid chain; its full sequence is Squalene synthase 11 (415 aa).

The next 2 helical transmembrane spans lie at 281 to 301 (AIFR…ALCF) and 392 to 412 (LIII…SNLP).

This sequence belongs to the phytoene/squalene synthase family. The cofactor is Mg(2+). Mn(2+) is required as a cofactor.

It is found in the endoplasmic reticulum membrane. It catalyses the reaction 2 (2E,6E)-farnesyl diphosphate + NADH + H(+) = squalene + 2 diphosphate + NAD(+). It carries out the reaction 2 (2E,6E)-farnesyl diphosphate + NADPH + H(+) = squalene + 2 diphosphate + NADP(+). It functions in the pathway terpene metabolism; lanosterol biosynthesis; lanosterol from farnesyl diphosphate: step 1/3. Component of the triterpene saponins (e.g. ginsenosides or panaxosides) and phytosterols biosynthetic pathways. Catalyzes the biosynthesis of squalene. The polypeptide is Squalene synthase 11 (Panax ginseng (Korean ginseng)).